The chain runs to 202 residues: UPF0102 protein Dde_1093 (202 aa).

This sequence belongs to the UPF0102 family.

This chain is UPF0102 protein Dde_1093, found in Oleidesulfovibrio alaskensis (strain ATCC BAA-1058 / DSM 17464 / G20) (Desulfovibrio alaskensis).